An 85-amino-acid chain; its full sequence is Large ribosomal subunit protein bL27 (85 aa).

The protein belongs to the bacterial ribosomal protein bL27 family.

The polypeptide is Large ribosomal subunit protein bL27 (Solibacter usitatus (strain Ellin6076)).